The following is a 68-amino-acid chain: Neuronal regeneration-related protein (68 aa).

The segment at 21 to 54 (MEGRLPKGRLPVPKEVNRKKNDETNAASLTPLGS) is disordered. The segment covering 44-54 (TNAASLTPLGS) has biased composition (polar residues).

Interacts with the latency-associated peptides (LAP) of TGFB1 and TGFB2; the interaction results in a decrease in TGFB autoinduction. Interacts with FLNA. Phosphorylated on Ser-59. Phosphorylation decreases stability and activity.

It localises to the cytoplasm. In terms of biological role, may have roles in neural function and cellular differentiation. Ectopic expression promotes axonal regeneration, induces differentiation of fibroblast into myofibroblast, induces myofibroblast ameboid migration, augments motility of gliomas, and increases retinoic-acid regulation of lipid-droplet biogenesis. Down-regulates the expression of TGFB1 and TGFB2 but not of TGFB3. May play a role in the regulation of alveolar generation. This chain is Neuronal regeneration-related protein (NREP), found in Macaca fascicularis (Crab-eating macaque).